A 215-amino-acid chain; its full sequence is Methylthioribulose-1-phosphate dehydratase (215 aa).

Zn(2+) is bound by residues His103 and His105.

Belongs to the aldolase class II family. MtnB subfamily. Zn(2+) serves as cofactor.

It catalyses the reaction 5-(methylsulfanyl)-D-ribulose 1-phosphate = 5-methylsulfanyl-2,3-dioxopentyl phosphate + H2O. It functions in the pathway amino-acid biosynthesis; L-methionine biosynthesis via salvage pathway; L-methionine from S-methyl-5-thio-alpha-D-ribose 1-phosphate: step 2/6. Catalyzes the dehydration of methylthioribulose-1-phosphate (MTRu-1-P) into 2,3-diketo-5-methylthiopentyl-1-phosphate (DK-MTP-1-P). The chain is Methylthioribulose-1-phosphate dehydratase from Sulfurihydrogenibium sp. (strain YO3AOP1).